Consider the following 170-residue polypeptide: ATP synthase subunit b (170 aa).

Residues 4–24 (ILLLGLALAPVALFASQGAVE) form a helical membrane-spanning segment.

It belongs to the ATPase B chain family. In terms of assembly, F-type ATPases have 2 components, F(1) - the catalytic core - and F(0) - the membrane proton channel. F(1) has five subunits: alpha(3), beta(3), gamma(1), delta(1), epsilon(1). F(0) has three main subunits: a(1), b(2) and c(10-14). The alpha and beta chains form an alternating ring which encloses part of the gamma chain. F(1) is attached to F(0) by a central stalk formed by the gamma and epsilon chains, while a peripheral stalk is formed by the delta and b chains.

It localises to the cell inner membrane. Its function is as follows. F(1)F(0) ATP synthase produces ATP from ADP in the presence of a proton or sodium gradient. F-type ATPases consist of two structural domains, F(1) containing the extramembraneous catalytic core and F(0) containing the membrane proton channel, linked together by a central stalk and a peripheral stalk. During catalysis, ATP synthesis in the catalytic domain of F(1) is coupled via a rotary mechanism of the central stalk subunits to proton translocation. In terms of biological role, component of the F(0) channel, it forms part of the peripheral stalk, linking F(1) to F(0). The sequence is that of ATP synthase subunit b from Aliarcobacter butzleri (strain RM4018) (Arcobacter butzleri).